A 79-amino-acid chain; its full sequence is Dolichyl-diphosphooligosaccharide--protein glycosyltransferase subunit DAD1 (79 aa).

At 1–19 (AVATALIQVAYMGLVGSFP) the chain is on the lumenal side. The chain crosses the membrane as a helical span at residues 20–40 (FNSFLSGVLSCIGTAVLAVCL). Residues 41 to 58 (RIQVNKDNKEFKDLPPER) are Cytoplasmic-facing. Residues 59–79 (AFADFVLCNLVLHLVIMNFLG) traverse the membrane as a helical segment.

Belongs to the DAD/OST2 family. As to quaternary structure, component of the oligosaccharyltransferase (OST) complex.

Its subcellular location is the endoplasmic reticulum membrane. The protein operates within protein modification; protein glycosylation. In terms of biological role, subunit of the oligosaccharyl transferase (OST) complex that catalyzes the initial transfer of a defined glycan (Glc(3)Man(9)GlcNAc(2) in eukaryotes) from the lipid carrier dolichol-pyrophosphate to an asparagine residue within an Asn-X-Ser/Thr consensus motif in nascent polypeptide chains, the first step in protein N-glycosylation. N-glycosylation occurs cotranslationally and the complex associates with the Sec61 complex at the channel-forming translocon complex that mediates protein translocation across the endoplasmic reticulum (ER). All subunits are required for a maximal enzyme activity. In Zea mays (Maize), this protein is Dolichyl-diphosphooligosaccharide--protein glycosyltransferase subunit DAD1 (DAD1).